A 99-amino-acid chain; its full sequence is Phosphoribosyl-ATP pyrophosphatase (99 aa).

It belongs to the PRA-PH family.

Its subcellular location is the cytoplasm. The catalysed reaction is 1-(5-phospho-beta-D-ribosyl)-ATP + H2O = 1-(5-phospho-beta-D-ribosyl)-5'-AMP + diphosphate + H(+). It participates in amino-acid biosynthesis; L-histidine biosynthesis; L-histidine from 5-phospho-alpha-D-ribose 1-diphosphate: step 2/9. This is Phosphoribosyl-ATP pyrophosphatase from Methanococcoides burtonii (strain DSM 6242 / NBRC 107633 / OCM 468 / ACE-M).